Here is a 60-residue protein sequence, read N- to C-terminus: Phospholipase A2 (60 aa).

Ca(2+) is bound by residues Y27, G29, and G31. C28 and C44 are oxidised to a cystine. Residue H47 is part of the active site. Ca(2+) is bound at residue D48.

The cofactor is Ca(2+). Expressed by the venom gland.

It is found in the secreted. The catalysed reaction is a 1,2-diacyl-sn-glycero-3-phosphocholine + H2O = a 1-acyl-sn-glycero-3-phosphocholine + a fatty acid + H(+). In terms of biological role, snake venom phospholipase A2 (PLA2) that displays mild but significant inhibition of mouse platelet aggregation induced by ADP and collagen. In vivo, induces edema in the foot pads and gastrocnemius muscles of mice but shows no myonecrotic or myotoxic activity. PA2 catalyzes the calcium-dependent hydrolysis of the 2-acyl groups in 3-sn-phosphoglycerides. The protein is Phospholipase A2 of Lachesis muta rhombeata (Bushmaster).